The following is a 55-amino-acid chain: ATP synthase protein 8 (55 aa).

The chain crosses the membrane as a helical span at residues 4 to 24 (LDPAPWFSMLTVSWLIIFLLI).

This sequence belongs to the ATPase protein 8 family. In terms of assembly, F-type ATPases have 2 components, CF(1) - the catalytic core - and CF(0) - the membrane proton channel.

The protein localises to the mitochondrion membrane. In terms of biological role, mitochondrial membrane ATP synthase (F(1)F(0) ATP synthase or Complex V) produces ATP from ADP in the presence of a proton gradient across the membrane which is generated by electron transport complexes of the respiratory chain. F-type ATPases consist of two structural domains, F(1) - containing the extramembraneous catalytic core and F(0) - containing the membrane proton channel, linked together by a central stalk and a peripheral stalk. During catalysis, ATP synthesis in the catalytic domain of F(1) is coupled via a rotary mechanism of the central stalk subunits to proton translocation. Part of the complex F(0) domain. Minor subunit located with subunit a in the membrane. The sequence is that of ATP synthase protein 8 (MT-ATP8) from Petromyzon marinus (Sea lamprey).